The following is a 444-amino-acid chain: MQHRDEILTPSQLNTLARDLLESAFPLVWIEGELGNVSRPSSGHLYVTLKDAQAQVRCAMFKPKSQWLTFQPREGLRVLARGRLTLYEARGDYQIVLDHLEEAGEGALRRAFEQLRIRLEAEGLFDPARKQPLPVHPRRIAVITSPSGAVIRDIFSVLMRRFPLVEIELLPSLVQGDTAAAQITHLLRCADSSGRYDAILIARGGGSLEDLWAFNNEQLARTIAAAHTPVISAIGHETDFTLADFAADIRAPTPSVAAELLVPDQRALRQHLGQLQQRLLHLQQHRLDQAIQRADQLGLRLQARNPEMHLRLLAQRQAEAGRRLEQCLHHVLDRAQGQLRNHHTRLYALNPRQQIAGLQQHLKHLNPQQPLQRRLQQEQLRLHGLVRALEAVNPLATVARGYALVHRADNNTLVRDSAQVCVGDVLDTKLAHGQLRVRVEVSST.

Belongs to the XseA family. In terms of assembly, heterooligomer composed of large and small subunits.

It localises to the cytoplasm. It catalyses the reaction Exonucleolytic cleavage in either 5'- to 3'- or 3'- to 5'-direction to yield nucleoside 5'-phosphates.. Functionally, bidirectionally degrades single-stranded DNA into large acid-insoluble oligonucleotides, which are then degraded further into small acid-soluble oligonucleotides. The chain is Exodeoxyribonuclease 7 large subunit from Xylella fastidiosa (strain 9a5c).